A 128-amino-acid polypeptide reads, in one-letter code: Aspartate 1-decarboxylase (128 aa).

The active-site Schiff-base intermediate with substrate; via pyruvic acid is serine 25. Serine 25 bears the Pyruvic acid (Ser) mark. Residue threonine 57 participates in substrate binding. The active-site Proton donor is the tyrosine 58. Glycine 73–alanine 75 is a substrate binding site.

The protein belongs to the PanD family. In terms of assembly, heterooctamer of four alpha and four beta subunits. It depends on pyruvate as a cofactor. Post-translationally, is synthesized initially as an inactive proenzyme, which is activated by self-cleavage at a specific serine bond to produce a beta-subunit with a hydroxyl group at its C-terminus and an alpha-subunit with a pyruvoyl group at its N-terminus.

The protein resides in the cytoplasm. The enzyme catalyses L-aspartate + H(+) = beta-alanine + CO2. Its pathway is cofactor biosynthesis; (R)-pantothenate biosynthesis; beta-alanine from L-aspartate: step 1/1. Its function is as follows. Catalyzes the pyruvoyl-dependent decarboxylation of aspartate to produce beta-alanine. This is Aspartate 1-decarboxylase from Paraburkholderia xenovorans (strain LB400).